A 348-amino-acid polypeptide reads, in one-letter code: Phosphate acyltransferase (348 aa).

The protein belongs to the PlsX family. Homodimer. Probably interacts with PlsY.

The protein localises to the cytoplasm. It carries out the reaction a fatty acyl-[ACP] + phosphate = an acyl phosphate + holo-[ACP]. The protein operates within lipid metabolism; phospholipid metabolism. Functionally, catalyzes the reversible formation of acyl-phosphate (acyl-PO(4)) from acyl-[acyl-carrier-protein] (acyl-ACP). This enzyme utilizes acyl-ACP as fatty acyl donor, but not acyl-CoA. The chain is Phosphate acyltransferase from Rhizobium rhizogenes (strain K84 / ATCC BAA-868) (Agrobacterium radiobacter).